The primary structure comprises 232 residues: Large ribosomal subunit protein uL1 (232 aa).

It belongs to the universal ribosomal protein uL1 family. In terms of assembly, part of the 50S ribosomal subunit.

In terms of biological role, binds directly to 23S rRNA. The L1 stalk is quite mobile in the ribosome, and is involved in E site tRNA release. Its function is as follows. Protein L1 is also a translational repressor protein, it controls the translation of the L11 operon by binding to its mRNA. This chain is Large ribosomal subunit protein uL1, found in Stenotrophomonas maltophilia (strain K279a).